The chain runs to 446 residues: Packaging protein 1 (446 aa).

Positions 1 to 10 (METRGRRRAF) are enriched in basic residues. The tract at residues 1–74 (METRGRRRAF…PSQPPQPRSL (74 aa)) is disordered. 170-177 (GPTGCGKS) is a binding site for ATP. Positions 439 to 446 (RAYRKRNK) are DNA-binding.

This sequence belongs to the adenoviridae packaging protein 1 family. Homodimer. Part of a genome packaging complex composed of packaging proteins 1, 2 and 3; this complex specifically binds to the packaging sequence on the left end of viral genomic DNA and performs packaging of the viral genome. Interacts with protein 33K.

The protein resides in the virion. The protein localises to the host nucleus. Its subcellular location is the host nucleoplasm. It localises to the host nucleolus. Its function is as follows. Component of the packaging machinery which encapsidates the viral DNA into preformed capsids and transcriptional activator of the viral major late promoter (MLP). Binds, along with packaging proteins 2 and 3, to the specific packaging sequence on the left end of viral genomic DNA and displays ATPase activity thereby providing the power stroke of the packaging machinery. The activity of packaging protein IVa2 is stimulated by protein 33K which acts as a terminase. May be the protein that pumps DNA into the capsid powered by ATP hydrolysis. Specifically binds to the 5'-CG-3' nucleotides of the repeats making up the packaging sequence. Component of the DEF-A and DEF-B transcription factors that bind downstream elements of the major late promoter (MLP), and stimulate transcription from the MLP after initiation of viral DNA replication. DEF-A is a heterodimer packaging proteins 1 and 2 and DEF-B is a homodimer of packaging protein 1. This chain is Packaging protein 1, found in Human adenovirus F serotype 40 (HAdV-40).